The primary structure comprises 317 residues: uncharacterized protein (317 aa).

It belongs to the asfivirus F317L family.

Its subcellular location is the virion. This is an uncharacterized protein from African swine fever virus (strain Badajoz 1971 Vero-adapted) (Ba71V).